We begin with the raw amino-acid sequence, 595 residues long: Probable translation initiation factor IF-2 (595 aa).

One can recognise a tr-type G domain in the interval 11-225 (LRTPIVAVLG…ILVGLAQRYL (215 aa)). The interval 20-27 (GHVDHGKT) is G1. 20 to 27 (GHVDHGKT) serves as a coordination point for GTP. Residues 45–49 (GITQH) are G2. Residues 81–84 (DTPG) form a G3 region. GTP contacts are provided by residues 81-85 (DTPGH) and 135-138 (NKID). The segment at 135-138 (NKID) is G4. The G5 stretch occupies residues 203-205 (SAL).

This sequence belongs to the TRAFAC class translation factor GTPase superfamily. Classic translation factor GTPase family. IF-2 subfamily.

Functionally, function in general translation initiation by promoting the binding of the formylmethionine-tRNA to ribosomes. Seems to function along with eIF-2. In Archaeoglobus fulgidus (strain ATCC 49558 / DSM 4304 / JCM 9628 / NBRC 100126 / VC-16), this protein is Probable translation initiation factor IF-2 (infB).